The following is a 332-amino-acid chain: FAD-dependent monooxygenase elcE (332 aa).

This sequence belongs to the oxygen-dependent FAD-linked oxidoreductase family.

It functions in the pathway secondary metabolite biosynthesis. Functionally, FAD-dependent monooxygenase; part of the gene cluster that mediates the biosynthesis of elsinochrome C, a perelyenequinone phytotoxin structurally similar to cercosporin. The first step of elsinochrome C biosynthesis is performed by the polyketide synthase elcA which catalyzes the formation of nor-toralactone. The starter unit acyltransferase (SAT) domain of elcA initiates polyketide extension by the selective utilization of acetyl-CoA, which is elongated to the heptaketide in the beta-ketoacyl synthase (KS) domain by successive condensations with six malonyl units introduced by the malonyl acyltransferase (MAT) domain. The product template (PT) domain catalyzes C4-C9 and C2-C11 aldol cyclizations and dehydrations to a trihydroxynaphthalene, which is thought to be delivered to the thioesterase (TE) domain for product release. The bifunctional enzyme elcB then methylates nor-toralactone to toralactone before conducting an unusual oxidative aromatic ring opening. The next step in perylenequinone biosynthesis is an O-methylation at the nascent OH-6 of the elcB product performed by the O-methyltransferase elcD. The oxidative coupling of the two monomeric naphthol units in perylenequinone biosynthesis is catalyzed by the FAD-dependent monooxygenase elcE and the multicopper oxidase elcG. ElcG might catalyze the first intermolecular coupling in a regio- and stereo-selective manner via a phenol radical coupling mechanism and the elcE could forge the second C-C bond intramolecularly via a hydride transfer mechanism. The fasciclin domain-containing protein elcF might also play a role duting this step. The last piece of the puzzle in the biosynthesis of elsinochrome C is the additional annulation by enolate coupling to afford the dihydrobenzo(ghi)perylenequinone system, catalyzed by the FAD-dependent monooxygenase elcH. This Phaeosphaeria nodorum (strain SN15 / ATCC MYA-4574 / FGSC 10173) (Glume blotch fungus) protein is FAD-dependent monooxygenase elcE.